The sequence spans 156 residues: tRNA (cytidine(34)-2'-O)-methyltransferase (156 aa).

Positions 102, 124, and 132 each coordinate S-adenosyl-L-methionine.

Belongs to the class IV-like SAM-binding methyltransferase superfamily. RNA methyltransferase TrmH family. TrmL subfamily. As to quaternary structure, homodimer.

The protein localises to the cytoplasm. The enzyme catalyses cytidine(34) in tRNA + S-adenosyl-L-methionine = 2'-O-methylcytidine(34) in tRNA + S-adenosyl-L-homocysteine + H(+). It carries out the reaction 5-carboxymethylaminomethyluridine(34) in tRNA(Leu) + S-adenosyl-L-methionine = 5-carboxymethylaminomethyl-2'-O-methyluridine(34) in tRNA(Leu) + S-adenosyl-L-homocysteine + H(+). In terms of biological role, methylates the ribose at the nucleotide 34 wobble position in the two leucyl isoacceptors tRNA(Leu)(CmAA) and tRNA(Leu)(cmnm5UmAA). Catalyzes the methyl transfer from S-adenosyl-L-methionine to the 2'-OH of the wobble nucleotide. This is tRNA (cytidine(34)-2'-O)-methyltransferase from Burkholderia ambifaria (strain ATCC BAA-244 / DSM 16087 / CCUG 44356 / LMG 19182 / AMMD) (Burkholderia cepacia (strain AMMD)).